The chain runs to 664 residues: Macoilin-1 (664 aa).

4 helical membrane passes run 28 to 48 (TFLY…DFVL), 75 to 95 (AFSV…LLFI), 120 to 140 (VCLP…AIRF), and 154 to 174 (FAAH…KSYV). The disordered stretch occupies residues 206-225 (QMLQRQERETEEATSKGMSE). Positions 210 to 219 (RQERETEEAT) are enriched in basic and acidic residues. N-linked (GlcNAc...) asparagine glycans are attached at residues asparagine 234, asparagine 336, asparagine 339, asparagine 348, and asparagine 655. Disordered regions lie at residues 315 to 364 (VGAG…LAPH) and 644 to 664 (FMDT…PLKK). Residues 334-348 (SHNSTNGSVPSSSSN) are compositionally biased toward low complexity. Residues 644-658 (FMDTSPSSLDPNASV) are compositionally biased toward polar residues.

This sequence belongs to the macoilin family.

It localises to the nucleus membrane. The protein localises to the rough endoplasmic reticulum membrane. Its function is as follows. May play a role in the regulation of neuronal activity. This chain is Macoilin-1, found in Danio rerio (Zebrafish).